The primary structure comprises 589 residues: Proline--tRNA ligase (589 aa).

The protein belongs to the class-II aminoacyl-tRNA synthetase family. ProS type 1 subfamily. As to quaternary structure, homodimer.

The protein localises to the cytoplasm. The enzyme catalyses tRNA(Pro) + L-proline + ATP = L-prolyl-tRNA(Pro) + AMP + diphosphate. Functionally, catalyzes the attachment of proline to tRNA(Pro) in a two-step reaction: proline is first activated by ATP to form Pro-AMP and then transferred to the acceptor end of tRNA(Pro). As ProRS can inadvertently accommodate and process non-cognate amino acids such as alanine and cysteine, to avoid such errors it has two additional distinct editing activities against alanine. One activity is designated as 'pretransfer' editing and involves the tRNA(Pro)-independent hydrolysis of activated Ala-AMP. The other activity is designated 'posttransfer' editing and involves deacylation of mischarged Ala-tRNA(Pro). The misacylated Cys-tRNA(Pro) is not edited by ProRS. This chain is Proline--tRNA ligase, found in Corynebacterium aurimucosum (strain ATCC 700975 / DSM 44827 / CIP 107346 / CN-1) (Corynebacterium nigricans).